The sequence spans 431 residues: STE20-related kinase adapter protein alpha (431 aa).

Serine 2 and serine 46 each carry phosphoserine. Disordered stretches follow at residues 32-52 (EQPP…SIAS) and 314-344 (PSRS…SHPY). Positions 69–379 (YELLTIIGKG…ASTLLNHSFF (311 aa)) constitute a Protein kinase domain. Threonine 419 bears the Phosphothreonine; by LKB1 mark.

The protein belongs to the protein kinase superfamily. STE Ser/Thr protein kinase family. STE20 subfamily. In terms of assembly, component of a trimeric complex composed of STK11/LKB1, STRAD (STRADA or STRADB) and CAB39/MO25 (CAB39/MO25alpha or CAB39L/MO25beta): the complex tethers STK11/LKB1 in the cytoplasm and stimulates its catalytic activity.

Its subcellular location is the nucleus. The protein localises to the cytoplasm. In terms of biological role, pseudokinase which, in complex with CAB39/MO25 (CAB39/MO25alpha or CAB39L/MO25beta), binds to and activates STK11/LKB1. Adopts a closed conformation typical of active protein kinases and binds STK11/LKB1 as a pseudosubstrate, promoting conformational change of STK11/LKB1 in an active conformation. The protein is STE20-related kinase adapter protein alpha (Strada) of Mus musculus (Mouse).